The following is a 412-amino-acid chain: Protein ALF (412 aa).

2 disordered regions span residues 1-47 (MDPE…PLPP) and 154-234 (GLSE…GISE). The span at 31-47 (PPQPPPPPLPPPQPLPP) shows a compositional bias: pro residues. Residues 187 to 196 (MRQRRRKKVV) are compositionally biased toward basic residues. Acidic residues predominate over residues 206-221 (MEEDEDTEEGQEDNED). 3 DNA-binding regions span residues 237-241 (REHPF), 306-313 (NKPKMRHY), and 377-380 (YVPT).

The protein belongs to the FLO/LFY family. Expressed in the floral meristem and also in the vegetative meristem.

The protein localises to the nucleus. In terms of biological role, probable transcription factor required for the specification of floral meristem identity. This chain is Protein ALF (ALF), found in Petunia hybrida (Petunia).